Here is a 236-residue protein sequence, read N- to C-terminus: uncharacterized protein (236 aa).

In terms of domain architecture, Response regulatory spans 3 to 116 (TCLIVDDELF…RLSKTLKRVR (114 aa)). Residue Asp-54 is modified to 4-aspartylphosphate. Residues 135–235 (LPCYSGSKLK…LKSLKQLFGF (101 aa)) form the HTH LytTR-type domain.

This is an uncharacterized protein from Shewanella oneidensis (strain ATCC 700550 / JCM 31522 / CIP 106686 / LMG 19005 / NCIMB 14063 / MR-1).